The primary structure comprises 206 residues: Guanylate kinase (206 aa).

In terms of domain architecture, Guanylate kinase-like spans 3–183 (GNLYILSAPS…ALTELKSILT (181 aa)). 10-17 (APSGAGKS) serves as a coordination point for ATP.

This sequence belongs to the guanylate kinase family.

Its subcellular location is the cytoplasm. The catalysed reaction is GMP + ATP = GDP + ADP. In terms of biological role, essential for recycling GMP and indirectly, cGMP. This is Guanylate kinase from Haemophilus ducreyi (strain 35000HP / ATCC 700724).